The following is a 390-amino-acid chain: NADH-quinone oxidoreductase subunit D (390 aa).

It belongs to the complex I 49 kDa subunit family. NDH-1 is composed of 14 different subunits. Subunits NuoB, C, D, E, F, and G constitute the peripheral sector of the complex.

The protein resides in the cell membrane. The enzyme catalyses a quinone + NADH + 5 H(+)(in) = a quinol + NAD(+) + 4 H(+)(out). Its function is as follows. NDH-1 shuttles electrons from NADH, via FMN and iron-sulfur (Fe-S) centers, to quinones in the respiratory chain. The immediate electron acceptor for the enzyme in this species is believed to be ubiquinone. Couples the redox reaction to proton translocation (for every two electrons transferred, four hydrogen ions are translocated across the cytoplasmic membrane), and thus conserves the redox energy in a proton gradient. This Wolbachia sp. subsp. Brugia malayi (strain TRS) protein is NADH-quinone oxidoreductase subunit D.